The sequence spans 156 residues: Small ribosomal subunit protein uS7 (156 aa).

Belongs to the universal ribosomal protein uS7 family. As to quaternary structure, part of the 30S ribosomal subunit. Contacts proteins S9 and S11.

Functionally, one of the primary rRNA binding proteins, it binds directly to 16S rRNA where it nucleates assembly of the head domain of the 30S subunit. Is located at the subunit interface close to the decoding center, probably blocks exit of the E-site tRNA. This is Small ribosomal subunit protein uS7 from Pelobacter propionicus (strain DSM 2379 / NBRC 103807 / OttBd1).